We begin with the raw amino-acid sequence, 513 residues long: ATP synthase subunit alpha (513 aa).

Gly169–Ser176 is an ATP binding site.

The protein belongs to the ATPase alpha/beta chains family. As to quaternary structure, F-type ATPases have 2 components, CF(1) - the catalytic core - and CF(0) - the membrane proton channel. CF(1) has five subunits: alpha(3), beta(3), gamma(1), delta(1), epsilon(1). CF(0) has three main subunits: a(1), b(2) and c(9-12). The alpha and beta chains form an alternating ring which encloses part of the gamma chain. CF(1) is attached to CF(0) by a central stalk formed by the gamma and epsilon chains, while a peripheral stalk is formed by the delta and b chains.

Its subcellular location is the cell inner membrane. The catalysed reaction is ATP + H2O + 4 H(+)(in) = ADP + phosphate + 5 H(+)(out). In terms of biological role, produces ATP from ADP in the presence of a proton gradient across the membrane. The alpha chain is a regulatory subunit. The polypeptide is ATP synthase subunit alpha (Sodalis glossinidius (strain morsitans)).